Here is a 561-residue protein sequence, read N- to C-terminus: Putative transport protein CKO_02260 (561 aa).

The next 5 helical transmembrane spans lie at 8–28, 32–52, 66–86, 94–114, and 158–178; these read LLNG…LCLG, LGSV…LLGQ, FMLF…SIFF, MLAL…GKLF, and NLSL…IVGA. RCK C-terminal domains are found at residues 200 to 288 and 292 to 373; these read RGLD…SFRN and VFDR…RIGF. Transmembrane regions (helical) follow at residues 383 to 403, 406 to 426, 447 to 467, 475 to 495, and 540 to 560; these read LLAF…TFQF, FSFG…LGFL, FGLM…IGNG, MLIA…LFGA, and AIAN…WPGL.

The protein belongs to the AAE transporter (TC 2.A.81) family. YbjL subfamily.

The protein localises to the cell membrane. In Citrobacter koseri (strain ATCC BAA-895 / CDC 4225-83 / SGSC4696), this protein is Putative transport protein CKO_02260.